A 134-amino-acid chain; its full sequence is Probable RNA-binding protein MJ0652 (134 aa).

The CRM domain maps to 11–108 (RKLTGKMKRM…REGWKKYLAK (98 aa)).

The protein is Probable RNA-binding protein MJ0652 of Methanocaldococcus jannaschii (strain ATCC 43067 / DSM 2661 / JAL-1 / JCM 10045 / NBRC 100440) (Methanococcus jannaschii).